Reading from the N-terminus, the 428-residue chain is 3-phosphoshikimate 1-carboxyvinyltransferase (428 aa).

Residues lysine 23, serine 24, and arginine 28 each coordinate 3-phosphoshikimate. Lysine 23 provides a ligand contact to phosphoenolpyruvate. Phosphoenolpyruvate contacts are provided by glycine 97 and arginine 125. 3-phosphoshikimate-binding residues include serine 170, serine 171, glutamine 172, serine 198, aspartate 314, asparagine 338, and lysine 342. Glutamine 172 lines the phosphoenolpyruvate pocket. The Proton acceptor role is filled by aspartate 314. Residues arginine 346, arginine 388, and lysine 413 each coordinate phosphoenolpyruvate.

It belongs to the EPSP synthase family. In terms of assembly, monomer.

It is found in the cytoplasm. It catalyses the reaction 3-phosphoshikimate + phosphoenolpyruvate = 5-O-(1-carboxyvinyl)-3-phosphoshikimate + phosphate. Its pathway is metabolic intermediate biosynthesis; chorismate biosynthesis; chorismate from D-erythrose 4-phosphate and phosphoenolpyruvate: step 6/7. Functionally, catalyzes the transfer of the enolpyruvyl moiety of phosphoenolpyruvate (PEP) to the 5-hydroxyl of shikimate-3-phosphate (S3P) to produce enolpyruvyl shikimate-3-phosphate and inorganic phosphate. In Baumannia cicadellinicola subsp. Homalodisca coagulata, this protein is 3-phosphoshikimate 1-carboxyvinyltransferase.